The sequence spans 619 residues: Putative transcription activator BRLF1 homolog (619 aa).

Disordered stretches follow at residues 301-389 (LRDS…ETQS) and 563-603 (GLVS…SDEM). 2 stretches are compositionally biased toward low complexity: residues 371–389 (EAPQ…ETQS) and 567–582 (QQQA…GGPP). The segment covering 589–598 (QEQQQSSTDP) has biased composition (polar residues).

It belongs to the herpesviridae TAF50 family.

Transcription activation. This is Putative transcription activator BRLF1 homolog (50) from Connochaetes taurinus (Blue wildebeest).